A 424-amino-acid chain; its full sequence is Glutamate-1-semialdehyde 2,1-aminomutase (424 aa).

The residue at position 258 (Lys258) is an N6-(pyridoxal phosphate)lysine.

It belongs to the class-III pyridoxal-phosphate-dependent aminotransferase family. HemL subfamily. Requires pyridoxal 5'-phosphate as cofactor.

The protein resides in the cytoplasm. The catalysed reaction is (S)-4-amino-5-oxopentanoate = 5-aminolevulinate. The protein operates within porphyrin-containing compound metabolism; protoporphyrin-IX biosynthesis; 5-aminolevulinate from L-glutamyl-tRNA(Glu): step 2/2. This Pyrobaculum islandicum (strain DSM 4184 / JCM 9189 / GEO3) protein is Glutamate-1-semialdehyde 2,1-aminomutase.